Reading from the N-terminus, the 209-residue chain is ATP phosphoribosyltransferase (209 aa).

Belongs to the ATP phosphoribosyltransferase family. Short subfamily. In terms of assembly, heteromultimer composed of HisG and HisZ subunits.

The protein resides in the cytoplasm. It catalyses the reaction 1-(5-phospho-beta-D-ribosyl)-ATP + diphosphate = 5-phospho-alpha-D-ribose 1-diphosphate + ATP. It functions in the pathway amino-acid biosynthesis; L-histidine biosynthesis; L-histidine from 5-phospho-alpha-D-ribose 1-diphosphate: step 1/9. Its function is as follows. Catalyzes the condensation of ATP and 5-phosphoribose 1-diphosphate to form N'-(5'-phosphoribosyl)-ATP (PR-ATP). Has a crucial role in the pathway because the rate of histidine biosynthesis seems to be controlled primarily by regulation of HisG enzymatic activity. In Sulfurimonas denitrificans (strain ATCC 33889 / DSM 1251) (Thiomicrospira denitrificans (strain ATCC 33889 / DSM 1251)), this protein is ATP phosphoribosyltransferase.